Here is an 898-residue protein sequence, read N- to C-terminus: Endoplasmic reticulum metallopeptidase 1 (898 aa).

N-acetylmethionine is present on Met-1. A disordered region spans residues 1-59; sequence MEWSSESAAVRRHRGTAERREGQAAASHPQREASAQEDARGGGRMRGRTESGGESRGAK. Topologically, residues 1 to 66 are cytoplasmic; the sequence is MEWSSESAAV…GAKTALSEAR (66 aa). Over residues 37-57 the composition is skewed to basic and acidic residues; it reads EDARGGGRMRGRTESGGESRG. A helical transmembrane segment spans residues 67–87; the sequence is TALALALYLLALRALVQLSLQ. At 88 to 393 the chain is on the lumenal side; sequence RLVLSRTSGL…SSSEYRHGSM (306 aa). An N-linked (GlcNAc...) asparagine glycan is attached at Asn-176. Cys-198 and Cys-216 are oxidised to a cystine. Zn(2+) is bound by residues His-199 and Asp-211. The Proton acceptor role is filled by Glu-245. Residues Glu-246, Glu-272, and His-348 each coordinate Zn(2+). Residues 394–414 traverse the membrane as a helical segment; the sequence is VFFDVLGLLVIAYPSRVGSII. Residues 415–451 lie on the Cytoplasmic side of the membrane; that stretch reads NYMVVMAVVLYLGRKLLRPNHSNSNYVRDFLCGLGIT. Residues 452-472 traverse the membrane as a helical segment; sequence FISWFTSLVTVLIIAVFVSLI. Residues 473 to 480 are Lumenal-facing; that stretch reads GQSLSWYN. A helical transmembrane segment spans residues 481–501; sequence YFYIAVCLYGTATVAKIILIH. Residues 502 to 515 are Cytoplasmic-facing; the sequence is TLAKRFYYVNASDL. A helical membrane pass occupies residues 516-538; sequence YLGELFFDTSLFVHCGFLVALTA. Residues 539–542 lie on the Lumenal side of the membrane; the sequence is QGFC. A helical transmembrane segment spans residues 543–562; it reads SAFMSAVWVAFPLLTKLCVY. The Cytoplasmic portion of the chain corresponds to 563 to 573; sequence KDFKKHGAKGR. Residues 574-594 form a helical membrane-spanning segment; that stretch reads FIALYLLGMFIPYLYGLYLIW. At 595–615 the chain is on the lumenal side; the sequence is AVFEMFTPILGRSGSEIPPDV. The chain crosses the membrane as a helical span at residues 616–636; it reads VLASILAVCVMILSSYFITFI. Over 637–645 the chain is Cytoplasmic; sequence YLVNSTKKT. A helical transmembrane segment spans residues 646 to 666; sequence ILTLILVCAVTFLLVCSGAFF. At 667–898 the chain is on the lumenal side; sequence PYSSNPDSPK…WVSTYSLFVF (232 aa). N-linked (GlcNAc...) asparagine glycosylation occurs at Asn-724.

The protein belongs to the peptidase M28 family. Requires Zn(2+) as cofactor. Widely expressed, with highest levels in ovary, kidney, hypothalamus and hippocampus. Within the ovarian follicle, expressed in granulosa cells, but not in oocytes. Present in both preantral and antral follicles, but not in atretic antral follicle.

The protein resides in the endoplasmic reticulum membrane. Within the ovary, required for the organization of somatic cells and oocytes into discrete follicular structures. The chain is Endoplasmic reticulum metallopeptidase 1 from Rattus norvegicus (Rat).